The following is a 70-amino-acid chain: Protein SlyX homolog (70 aa).

The protein belongs to the SlyX family.

This is Protein SlyX homolog from Shewanella putrefaciens (strain CN-32 / ATCC BAA-453).